Reading from the N-terminus, the 447-residue chain is ATP-dependent protease ATPase subunit HslU (447 aa).

ATP-binding positions include Ile17, 59–64 (GVGKTE), Asp256, Glu321, and Arg393.

It belongs to the ClpX chaperone family. HslU subfamily. As to quaternary structure, a double ring-shaped homohexamer of HslV is capped on each side by a ring-shaped HslU homohexamer. The assembly of the HslU/HslV complex is dependent on binding of ATP.

The protein resides in the cytoplasm. ATPase subunit of a proteasome-like degradation complex; this subunit has chaperone activity. The binding of ATP and its subsequent hydrolysis by HslU are essential for unfolding of protein substrates subsequently hydrolyzed by HslV. HslU recognizes the N-terminal part of its protein substrates and unfolds these before they are guided to HslV for hydrolysis. In Pseudomonas putida (strain W619), this protein is ATP-dependent protease ATPase subunit HslU.